The chain runs to 2222 residues: DNA polymerase epsilon catalytic subunit A (2222 aa).

The tract at residues 90–110 (ETLSSGSNGGGNSNDGERVTT) is disordered. Residues C2108, C2111, C2130, and C2133 each contribute to the Zn(2+) site. A CysA-type zinc finger spans residues 2108–2133 (CEYCFFISDIDFCKAAPESIFSCVRC). [4Fe-4S] cluster-binding residues include C2164, C2167, C2179, and C2181. The CysB motif signature appears at 2164–2181 (CSRCHKVKRDYMSAHCPC).

The protein belongs to the DNA polymerase type-B family. DNA polymerase epsilon is a heterotetramer consisting of POL2, DPB2, DPB3 and DPB4. It depends on [4Fe-4S] cluster as a cofactor.

The protein resides in the nucleus. The catalysed reaction is DNA(n) + a 2'-deoxyribonucleoside 5'-triphosphate = DNA(n+1) + diphosphate. Its function is as follows. Catalytic component of the DNA polymerase epsilon complex which participates in chromosomal DNA replication. Required during synthesis of the leading DNA strands at the replication fork, binds at/or near replication origins and moves along DNA with the replication fork. Has 3'-5' proofreading exonuclease activity that corrects errors arising during DNA replication. The protein is DNA polymerase epsilon catalytic subunit A (POL2) of Saccharomyces cerevisiae (strain ATCC 204508 / S288c) (Baker's yeast).